We begin with the raw amino-acid sequence, 136 residues long: Phosphoribosyl-AMP cyclohydrolase (136 aa).

Mg(2+) is bound at residue D89. C90 contacts Zn(2+). Residues D91 and D93 each coordinate Mg(2+). 2 residues coordinate Zn(2+): C106 and C113.

It belongs to the PRA-CH family. In terms of assembly, homodimer. Requires Mg(2+) as cofactor. The cofactor is Zn(2+).

The protein resides in the cytoplasm. The catalysed reaction is 1-(5-phospho-beta-D-ribosyl)-5'-AMP + H2O = 1-(5-phospho-beta-D-ribosyl)-5-[(5-phospho-beta-D-ribosylamino)methylideneamino]imidazole-4-carboxamide. It functions in the pathway amino-acid biosynthesis; L-histidine biosynthesis; L-histidine from 5-phospho-alpha-D-ribose 1-diphosphate: step 3/9. Functionally, catalyzes the hydrolysis of the adenine ring of phosphoribosyl-AMP. The protein is Phosphoribosyl-AMP cyclohydrolase of Bifidobacterium longum subsp. infantis (strain ATCC 15697 / DSM 20088 / JCM 1222 / NCTC 11817 / S12).